We begin with the raw amino-acid sequence, 159 residues long: Trafficking protein particle complex subunit 6A (159 aa).

Ser33 carries the phosphoserine modification.

The protein belongs to the TRAPP small subunits family. BET3 subfamily. Part of the multisubunit transport protein particle (TRAPP) complex. Heterodimer with TRAPPC3. The heterodimer TRAPPC3-TRAPPC6A interacts with TRAPPC2L. Interacts with TRAPPC2L.

The protein localises to the golgi apparatus. It localises to the cis-Golgi network. Its subcellular location is the endoplasmic reticulum. In terms of biological role, may play a role in vesicular transport during the biogenesis of melanosomes. The polypeptide is Trafficking protein particle complex subunit 6A (Bos taurus (Bovine)).